The chain runs to 228 residues: tRNA (guanine-N(1)-)-methyltransferase (228 aa).

S-adenosyl-L-methionine is bound by residues Gly111 and 131–136 (IGDFIL).

The protein belongs to the RNA methyltransferase TrmD family. Homodimer.

The protein resides in the cytoplasm. The enzyme catalyses guanosine(37) in tRNA + S-adenosyl-L-methionine = N(1)-methylguanosine(37) in tRNA + S-adenosyl-L-homocysteine + H(+). In terms of biological role, specifically methylates guanosine-37 in various tRNAs. The protein is tRNA (guanine-N(1)-)-methyltransferase of Pelagibacter ubique (strain HTCC1062).